A 102-amino-acid chain; its full sequence is Small integral membrane protein 29 (102 aa).

N3 is a glycosylation site (N-linked (GlcNAc...) asparagine). The helical transmembrane segment at 21 to 41 (VLGPFFLITLVGVVVAVVMYV) threads the bilayer.

As to expression, expressed in spleen, thymus, prostate, testis, uterus, small intestine, colon and peripheral blood leukocytes.

It localises to the membrane. This is Small integral membrane protein 29 from Homo sapiens (Human).